The primary structure comprises 485 residues: Beta-amyrin 28-monooxygenase CYP716A378 (485 aa).

The chain crosses the membrane as a helical; Signal-anchor for type II membrane protein span at residues 3 to 23 (LFFICGLVLFSTLSLISLFLL). 2 N-linked (GlcNAc...) asparagine glycosylation sites follow: Asn-25 and Asn-386. Cys-426 serves as a coordination point for heme.

The protein belongs to the cytochrome P450 family. It depends on heme as a cofactor. Mainly expressed in flowers and flower buds, to a lesser extent in young leaves and, at low levels, in old leaves, stems and roots.

The protein localises to the membrane. The enzyme catalyses beta-amyrin + 3 reduced [NADPH--hemoprotein reductase] + 3 O2 = oleanolate + 3 oxidized [NADPH--hemoprotein reductase] + 4 H2O + 4 H(+). It participates in secondary metabolite biosynthesis; terpenoid biosynthesis. In terms of biological role, component of the oleanane-type triterpene saponins (e.g. saponarioside A and saponarioside B) biosynthetic pathway, leading to the production of natural products with detergent properties used as traditional sources of soap. An oxidoreductase that facilitates the oxidation of the methyl group to a carboxyl group at the C-28 position of beta-amyrin, resulting in the formation of oleanolate. This chain is Beta-amyrin 28-monooxygenase CYP716A378, found in Saponaria officinalis (Common soapwort).